The following is a 208-amino-acid chain: UPF0637 protein BCQ_3749 (208 aa).

The protein belongs to the UPF0637 family.

This is UPF0637 protein BCQ_3749 from Bacillus cereus (strain Q1).